Consider the following 1303-residue polypeptide: D-lysergyl-peptide-synthetase subunit 2 (1303 aa).

Residues 256–653 form an adenylation (A) domain region; the sequence is EWCRWTPSAV…CRKSTQVKLR (398 aa). The Carrier domain maps to 793 to 869; the sequence is APSNDIEEAF…ELARHTKLVA (77 aa). O-(pantetheine 4'-phosphoryl)serine is present on Ser830. The segment at 905–1294 is condensation (C) domain; it reads EDVYPCTPLQ…HAAPRTLIGD (390 aa).

This sequence belongs to the NRP synthetase family.

It functions in the pathway alkaloid biosynthesis; ergot alkaloid biosynthesis. Its function is as follows. D-lysergyl-peptide-synthetase subunit 2; part of the gene cluster that mediates the biosynthesis of fungal ergot alkaloid. DmaW catalyzes the first step of ergot alkaloid biosynthesis by condensing dimethylallyl diphosphate (DMAP) and tryptophan to form 4-dimethylallyl-L-tryptophan. The second step is catalyzed by the methyltransferase easF that methylates 4-dimethylallyl-L-tryptophan in the presence of S-adenosyl-L-methionine, resulting in the formation of 4-dimethylallyl-L-abrine. The catalase easC and the FAD-dependent oxidoreductase easE then transform 4-dimethylallyl-L-abrine to chanoclavine-I which is further oxidized by easD in the presence of NAD(+), resulting in the formation of chanoclavine-I aldehyde. Agroclavine dehydrogenase easG then mediates the conversion of chanoclavine-I aldehyde to agroclavine via a non-enzymatic adduct reaction: the substrate is an iminium intermediate that is formed spontaneously from chanoclavine-I aldehyde in the presence of glutathione. The presence of easA is not required to complete this reaction. Further conversion of agroclavine to paspalic acid is a two-step process involving oxidation of agroclavine to elymoclavine and of elymoclavine to paspalic acid, the second step being performed by the elymoclavine oxidase cloA. Paspalic acid is then further converted to D-lysergic acid. Ergopeptines are assembled from D-lysergic acid and three different amino acids by the D-lysergyl-peptide-synthetases composed each of a monomudular and a trimodular nonribosomal peptide synthetase subunit. LpsB and lpsC encode the monomodular subunits responsible for D-lysergic acid activation and incorporation into the ergopeptine backbone. LpsA1 and A2 subunits encode the trimodular nonribosomal peptide synthetase assembling the tripeptide portion of ergopeptines. LpsA1 is responsible for formation of the major ergopeptine, ergotamine, and lpsA2 for alpha-ergocryptine, the minor ergopeptine of the total alkaloid mixture elaborated by C.purpurea. D-lysergyl-tripeptides are assembled by the nonribosomal peptide synthetases and released as N-(D-lysergyl-aminoacyl)-lactams. Cyclolization of the D-lysergyl-tripeptides is performed by the Fe(2+)/2-ketoglutarate-dependent dioxygenase easH which introduces a hydroxyl group into N-(D-lysergyl-aminoacyl)-lactam at alpha-C of the aminoacyl residue followed by spontaneous condensation with the terminal lactam carbonyl group. The protein is D-lysergyl-peptide-synthetase subunit 2 of Claviceps purpurea (strain 20.1) (Ergot fungus).